The sequence spans 360 residues: Phosphoserine aminotransferase (360 aa).

Residue R42 participates in L-glutamate binding. Residues 76–77 (AS), W102, T152, D172, and Q195 each bind pyridoxal 5'-phosphate. Position 196 is an N6-(pyridoxal phosphate)lysine (K196). 237-238 (NT) is a binding site for pyridoxal 5'-phosphate.

It belongs to the class-V pyridoxal-phosphate-dependent aminotransferase family. SerC subfamily. In terms of assembly, homodimer. Pyridoxal 5'-phosphate is required as a cofactor.

It is found in the cytoplasm. It catalyses the reaction O-phospho-L-serine + 2-oxoglutarate = 3-phosphooxypyruvate + L-glutamate. The catalysed reaction is 4-(phosphooxy)-L-threonine + 2-oxoglutarate = (R)-3-hydroxy-2-oxo-4-phosphooxybutanoate + L-glutamate. Its pathway is amino-acid biosynthesis; L-serine biosynthesis; L-serine from 3-phospho-D-glycerate: step 2/3. Functionally, catalyzes the reversible conversion of 3-phosphohydroxypyruvate to phosphoserine and of 3-hydroxy-2-oxo-4-phosphonooxybutanoate to phosphohydroxythreonine. The protein is Phosphoserine aminotransferase of Bacillus cereus (strain ATCC 14579 / DSM 31 / CCUG 7414 / JCM 2152 / NBRC 15305 / NCIMB 9373 / NCTC 2599 / NRRL B-3711).